The following is a 73-amino-acid chain: Protein DSS1 HOMOLOG ON CHROMOSOME V (73 aa).

Belongs to the DSS1/SEM1 family. In terms of assembly, part of the 26S proteasome. Interacts with BRCA2B. Interacts with EER5. Interacts with UCH1 and UCH2.

Subunit of the 26S proteasome which plays a role in ubiquitin-dependent proteolysis. Also associates with the TREX-2 complex that is required for transcription-coupled mRNA export. The sequence is that of Protein DSS1 HOMOLOG ON CHROMOSOME V from Arabidopsis thaliana (Mouse-ear cress).